A 724-amino-acid chain; its full sequence is Acyl-coenzyme A oxidase 2 (724 aa).

The disordered stretch occupies residues 1 to 23 (MALISNLKDEYDHPTKTDPDTNP). The segment covering 7–21 (LKDEYDHPTKTDPDT) has biased composition (basic and acidic residues).

It belongs to the acyl-CoA oxidase family. FAD is required as a cofactor.

The protein localises to the peroxisome. The enzyme catalyses a 2,3-saturated acyl-CoA + O2 = a (2E)-enoyl-CoA + H2O2. The protein operates within lipid metabolism; peroxisomal fatty acid beta-oxidation. The protein is Acyl-coenzyme A oxidase 2 (POX2) of Candida maltosa (Yeast).